A 304-amino-acid chain; its full sequence is Ornithine carbamoyltransferase (304 aa).

Carbamoyl phosphate contacts are provided by residues 47–50 (STRT), Arg-98, and 125–128 (HPCQ). L-ornithine contacts are provided by residues Asn-156, Asp-221, and 225 to 226 (SM). Carbamoyl phosphate contacts are provided by residues 262–263 (CL) and Arg-290.

It belongs to the aspartate/ornithine carbamoyltransferase superfamily. OTCase family.

It localises to the cytoplasm. The enzyme catalyses carbamoyl phosphate + L-ornithine = L-citrulline + phosphate + H(+). It functions in the pathway amino-acid biosynthesis; L-arginine biosynthesis; L-arginine from L-ornithine and carbamoyl phosphate: step 1/3. Its function is as follows. Reversibly catalyzes the transfer of the carbamoyl group from carbamoyl phosphate (CP) to the N(epsilon) atom of ornithine (ORN) to produce L-citrulline. This chain is Ornithine carbamoyltransferase, found in Methanococcus maripaludis (strain C5 / ATCC BAA-1333).